A 260-amino-acid chain; its full sequence is Indole-3-glycerol phosphate synthase (260 aa).

It belongs to the TrpC family.

The catalysed reaction is 1-(2-carboxyphenylamino)-1-deoxy-D-ribulose 5-phosphate + H(+) = (1S,2R)-1-C-(indol-3-yl)glycerol 3-phosphate + CO2 + H2O. It participates in amino-acid biosynthesis; L-tryptophan biosynthesis; L-tryptophan from chorismate: step 4/5. This is Indole-3-glycerol phosphate synthase from Koribacter versatilis (strain Ellin345).